We begin with the raw amino-acid sequence, 411 residues long: Phosphoglycerate kinase (411 aa).

The disordered stretch occupies residues 1–24 (MTGLCPLHQPSPLDHPHSGGTPMQ). Residues 41 to 43 (DYN), Arg56, 79 to 82 (HFGR), Arg139, and Arg172 each bind substrate. Residues Lys222, Gly310, Glu341, and 369–372 (GGDS) contribute to the ATP site.

The protein belongs to the phosphoglycerate kinase family. In terms of assembly, monomer.

The protein localises to the cytoplasm. The catalysed reaction is (2R)-3-phosphoglycerate + ATP = (2R)-3-phospho-glyceroyl phosphate + ADP. The protein operates within carbohydrate degradation; glycolysis; pyruvate from D-glyceraldehyde 3-phosphate: step 2/5. The chain is Phosphoglycerate kinase from Deinococcus radiodurans (strain ATCC 13939 / DSM 20539 / JCM 16871 / CCUG 27074 / LMG 4051 / NBRC 15346 / NCIMB 9279 / VKM B-1422 / R1).